Here is a 181-residue protein sequence, read N- to C-terminus: Protein Syd (181 aa).

This sequence belongs to the Syd family.

It localises to the cell inner membrane. Functionally, interacts with the SecY protein in vivo. May bind preferentially to an uncomplexed state of SecY, thus functioning either as a chelating agent for excess SecY in the cell or as a regulatory factor that negatively controls the translocase function. The chain is Protein Syd from Salmonella agona (strain SL483).